Reading from the N-terminus, the 775-residue chain is 1,4-alpha-glucan branching enzyme GlgB (775 aa).

Aspartate 431 serves as the catalytic Nucleophile. Glutamate 484 (proton donor) is an active-site residue.

Belongs to the glycosyl hydrolase 13 family. GlgB subfamily. In terms of assembly, monomer.

It catalyses the reaction Transfers a segment of a (1-&gt;4)-alpha-D-glucan chain to a primary hydroxy group in a similar glucan chain.. It participates in glycan biosynthesis; glycogen biosynthesis. Catalyzes the formation of the alpha-1,6-glucosidic linkages in glycogen by scission of a 1,4-alpha-linked oligosaccharide from growing alpha-1,4-glucan chains and the subsequent attachment of the oligosaccharide to the alpha-1,6 position. The protein is 1,4-alpha-glucan branching enzyme GlgB of Parasynechococcus marenigrum (strain WH8102).